We begin with the raw amino-acid sequence, 368 residues long: DNA replication and repair protein RecF (368 aa).

30 to 37 (GDNGAGKT) contacts ATP.

Belongs to the RecF family.

It is found in the cytoplasm. Its function is as follows. The RecF protein is involved in DNA metabolism; it is required for DNA replication and normal SOS inducibility. RecF binds preferentially to single-stranded, linear DNA. It also seems to bind ATP. This is DNA replication and repair protein RecF from Xanthomonas campestris pv. campestris (strain 8004).